A 501-amino-acid polypeptide reads, in one-letter code: G protein-activated inward rectifier potassium channel 1 (501 aa).

The interval 1–40 (MSALRRKFGDDYQVVTTSSSGSGLQPQGPGQGPQQQLVPK) is disordered. Residues 1–80 (MSALRRKFGD…LFTTLVDLKW (80 aa)) lie on the Cytoplasmic side of the membrane. Residues 18-37 (SSSGSGLQPQGPGQGPQQQL) are compositionally biased toward low complexity. Residues 81–105 (RWNLFIFILTYTVAWLFMASMWWVI) form a helical membrane-spanning segment. The Extracellular segment spans residues 106–129 (AYTRGDLNKAHVGNYTPCVANVYN). An N-linked (GlcNAc...) asparagine glycan is attached at N119. An intramembrane region (helical; Pore-forming) is located at residues 130 to 141 (FPSAFLFFIETE). The pore-forming intramembrane region spans 142–148 (ATIGYGY). The short motif at 143-148 (TIGYGY) is the Selectivity filter element. At 149–157 (RYITDKCPE) the chain is on the extracellular side. Residues 158-179 (GIILFLFQSILGSIVDAFLIGC) form a helical membrane-spanning segment. Residues 180-501 (MFIKMSQPKK…LRKMNSDRFT (322 aa)) are Cytoplasmic-facing. The segment at 182 to 209 (IKMSQPKKRAETLMFSEHAVISMRDGKL) is polyphosphoinositide (PIP2)-binding. Phosphoserine occurs at positions 385 and 424.

This sequence belongs to the inward rectifier-type potassium channel (TC 1.A.2.1) family. KCNJ3 subfamily. Associates with KCNJ5/GIRK4 or KCNJ6/GIRK2 or KCNJ9/GIRK3 to form a G-protein activated heteromultimer pore-forming unit. The resulting inward current is much larger.

It is found in the membrane. It catalyses the reaction K(+)(in) = K(+)(out). Heteromultimer composed of KCNJ3/GIRK1 and KCNJ5/GIRK4 is activated by phosphatidylinositol 4,5 biphosphate (PtdIns(4,5)P2). In terms of biological role, inward rectifier potassium channels are characterized by a greater tendency to allow potassium to flow into the cell rather than out of it. Their voltage dependence is regulated by the concentration of extracellular potassium; as external potassium is raised, the voltage range of the channel opening shifts to more positive voltages. The inward rectification is mainly due to the blockage of outward current by internal magnesium. This potassium channel is controlled by G proteins. This receptor plays a crucial role in regulating the heartbeat. The sequence is that of G protein-activated inward rectifier potassium channel 1 (KCNJ3) from Bos taurus (Bovine).